Consider the following 301-residue polypeptide: Recombination-associated protein RdgC (301 aa).

The protein belongs to the RdgC family.

It is found in the cytoplasm. The protein resides in the nucleoid. In terms of biological role, may be involved in recombination. This chain is Recombination-associated protein RdgC, found in Xanthomonas oryzae pv. oryzae (strain KACC10331 / KXO85).